Here is a 471-residue protein sequence, read N- to C-terminus: Collagenase 3 (471 aa).

Positions 1–19 (MQPGVLAACLLLSWTHCWS) are cleaved as a signal peptide. The propeptide at 20 to 103 (LPLLNSNEDD…PRCGVPDVGE (84 aa)) is activation peptide. A Cysteine switch motif is present at residues 94–101 (PRCGVPDV). Cys96 provides a ligand contact to Zn(2+). Asn117 carries N-linked (GlcNAc...) asparagine glycosylation. Asp128 is a binding site for Ca(2+). 2 N-linked (GlcNAc...) asparagine glycosylation sites follow: Asn152 and Asn158. Asp162 contributes to the Ca(2+) binding site. 2 residues coordinate Zn(2+): His172 and Asp174. Residues 176–246 (YPFDGPSGLL…GALMFPIYTY (71 aa)) are interaction with TIMP2. Ca(2+) is bound by residues Asp179, Gly180, Ser182, and Leu184. His187 is a Zn(2+) binding site. The Ca(2+) site is built by Asn194, Gly196, and Asp198. His200 is a binding site for Zn(2+). Positions 202, 203, and 205 each coordinate Ca(2+). His222 contacts Zn(2+). Residue Glu223 is part of the active site. 3 residues coordinate Zn(2+): His226, His232, and Met240. Residues 263-284 (QSLYGPGDEDPNPKHPKTPDKC) form a disordered region. An interaction with collagen region spans residues 268–471 (PGDEDPNPKH…VMPTNSLLWC (204 aa)). Residues 273–284 (PNPKHPKTPDKC) are compositionally biased toward basic and acidic residues. Hemopexin repeat units lie at residues 281–330 (PDKC…WPEL), 331–377 (PNRI…GFPR), 379–427 (VKKI…FPGI), and 428–471 (GGKV…LLWC). Cys284 and Cys471 are disulfide-bonded. Ca(2+)-binding residues include Asp291, Ile293, Asp335, and Ala337. Tyr366 bears the Phosphotyrosine; by PKDCC mark. Positions 383 and 385 each coordinate Ca(2+). A glycan (N-linked (GlcNAc...) asparagine) is linked at Asn409. Ca(2+) contacts are provided by Asp432 and Val434.

The protein belongs to the peptidase M10A family. Ca(2+) serves as cofactor. It depends on Zn(2+) as a cofactor. Post-translationally, the proenzyme is activated by removal of the propeptide; this cleavage can be effected by other matrix metalloproteinases, such as MMP2, MMP3 and MMP14 and may involve several cleavage steps. Cleavage can also be autocatalytic, after partial maturation by another protease or after treatment with 4-aminophenylmercuric acetate (APMA) (in vitro). In terms of processing, N-glycosylated. Tyrosine phosphorylated by PKDCC/VLK.

It is found in the secreted. It localises to the extracellular space. Its subcellular location is the extracellular matrix. In terms of biological role, plays a role in the degradation of extracellular matrix proteins including fibrillar collagen, fibronectin, TNC and ACAN. Cleaves triple helical collagens, including type I, type II and type III collagen, but has the highest activity with soluble type II collagen. Can also degrade collagen type IV, type XIV and type X. May also function by activating or degrading key regulatory proteins, such as TGFB1 and CCN2. Plays a role in wound healing, tissue remodeling, cartilage degradation, bone development, bone mineralization and ossification. Required for normal embryonic bone development and ossification. Plays a role in the healing of bone fractures via endochondral ossification. Plays a role in wound healing, probably by a mechanism that involves proteolytic activation of TGFB1 and degradation of CCN2. Plays a role in keratinocyte migration during wound healing. May play a role in cell migration and in tumor cell invasion. The chain is Collagenase 3 (MMP13) from Oryctolagus cuniculus (Rabbit).